A 184-amino-acid chain; its full sequence is Cobalamin adenosyltransferase (184 aa).

Residues 1–21 (MGNRLSKIATRTGDAGTTGLG) are disordered. ATP is bound by residues 10–13 (TRTG), 18–19 (TG), K28, 130–134 (RRAER), and N154.

Belongs to the Cob(I)alamin adenosyltransferase family. As to quaternary structure, homotrimer.

The catalysed reaction is 2 cob(II)alamin + AH2 + 2 ATP = 2 adenosylcob(III)alamin + 2 triphosphate + A + 2 H(+). Is potentially allosterically regulated by GTP/GDP, which enhances its affinity for AdoCbl by 5-fold. Binds cob(II)alamin weakly in the absence of ATP. The presence of ATP (but not GTP or GDP) increases the affinity of cob(II)alamin for the enzyme, and stoichiometric binding is observed. GTP blocks the transfer of cob(II)alamin to IcmF from ATR, thus averting its reconstitution with inactive cofactor. In terms of biological role, adenosyltransferase that catalyzes the conversion of cob(II)alamin to adenosylcob(III)alamin (AdoCbl) in the presence of ATP and an electron donor. Acts as an accessory protein of IcmF that functions in cofactor repair, since IcmF is prone to inactivation during catalytic turnover due to the occasional loss of the 5'-deoxyadenosine moiety and formation of the inactive cob(II)alamin cofactor in its active site. Thus, receives and repairs the inactive cofactor, which is then reloaded onto IcmF in a GTPase-gated step. This is Cobalamin adenosyltransferase from Cupriavidus metallidurans (strain ATCC 43123 / DSM 2839 / NBRC 102507 / CH34) (Ralstonia metallidurans).